A 356-amino-acid chain; its full sequence is UDP-N-acetylglucosamine--N-acetylmuramyl-(pentapeptide) pyrophosphoryl-undecaprenol N-acetylglucosamine transferase (356 aa).

Residues 12–14, Asn-124, Arg-163, Ser-188, Ile-242, 261–266, and Gln-287 each bind UDP-N-acetyl-alpha-D-glucosamine; these read TGG and ALTVSE.

This sequence belongs to the glycosyltransferase 28 family. MurG subfamily.

The protein localises to the cell inner membrane. The catalysed reaction is di-trans,octa-cis-undecaprenyl diphospho-N-acetyl-alpha-D-muramoyl-L-alanyl-D-glutamyl-meso-2,6-diaminopimeloyl-D-alanyl-D-alanine + UDP-N-acetyl-alpha-D-glucosamine = di-trans,octa-cis-undecaprenyl diphospho-[N-acetyl-alpha-D-glucosaminyl-(1-&gt;4)]-N-acetyl-alpha-D-muramoyl-L-alanyl-D-glutamyl-meso-2,6-diaminopimeloyl-D-alanyl-D-alanine + UDP + H(+). The protein operates within cell wall biogenesis; peptidoglycan biosynthesis. Its function is as follows. Cell wall formation. Catalyzes the transfer of a GlcNAc subunit on undecaprenyl-pyrophosphoryl-MurNAc-pentapeptide (lipid intermediate I) to form undecaprenyl-pyrophosphoryl-MurNAc-(pentapeptide)GlcNAc (lipid intermediate II). This Ectopseudomonas mendocina (strain ymp) (Pseudomonas mendocina) protein is UDP-N-acetylglucosamine--N-acetylmuramyl-(pentapeptide) pyrophosphoryl-undecaprenol N-acetylglucosamine transferase.